Reading from the N-terminus, the 88-residue chain is Small ribosomal subunit protein bS20 (88 aa).

Positions 1–27 (MANSKSAKKRALQSEKRRQHNASRRSM) are disordered.

This sequence belongs to the bacterial ribosomal protein bS20 family.

Its function is as follows. Binds directly to 16S ribosomal RNA. This is Small ribosomal subunit protein bS20 from Shewanella denitrificans (strain OS217 / ATCC BAA-1090 / DSM 15013).